We begin with the raw amino-acid sequence, 104 residues long: uncharacterized protein (104 aa).

As to quaternary structure, homodimer.

This is an uncharacterized protein from Bacillus subtilis (strain 168).